The following is an 862-amino-acid chain: DNA mismatch repair protein MutS (862 aa).

608–615 (GPNMAGKS) lines the ATP pocket.

It belongs to the DNA mismatch repair MutS family.

Its function is as follows. This protein is involved in the repair of mismatches in DNA. It is possible that it carries out the mismatch recognition step. This protein has a weak ATPase activity. The polypeptide is DNA mismatch repair protein MutS (Borrelia garinii subsp. bavariensis (strain ATCC BAA-2496 / DSM 23469 / PBi) (Borreliella bavariensis)).